We begin with the raw amino-acid sequence, 113 residues long: Tachykinin-4 (113 aa).

The N-terminal stretch at 1 to 20 (MLPCLALLLLMELSVCTVAG) is a signal peptide. Methionine 67 bears the Methionine amide mark. A propeptide spanning residues 71 to 79 (VGGRPLIQP) is cleaved from the precursor. Leucine 95 is subject to Leucine amide. The propeptide occupies 98–113 (RSLFTEGREDEAQGSE).

Belongs to the tachykinin family. In terms of tissue distribution, expressed at low levels in the uterus of both pregnant and non-pregnant women. Isoform 1 is found only in the adrenal gland and fetal liver. Isoform 2 is found in heart, liver, bone marrow, prostate, adrenal gland and testis. Isoform 3 and isoform 4 are expressed predominantly in adrenal gland and placenta.

It localises to the secreted. Its function is as follows. Tachykinins are active peptides which excite neurons, evoke behavioral responses, are potent vasodilators and secretagogues, and contract (directly or indirectly) many smooth muscles. Endokinin-A induces thermal hyperalgesia and pain-related behavior such as scratching following intrathecal administration in rats. These effects are suppressed by treatment with endokinin-C. Endokinin-A/B reduces arterial blood pressure and increases sperm motility. In Homo sapiens (Human), this protein is Tachykinin-4.